Reading from the N-terminus, the 77-residue chain is Small ribosomal subunit protein uS17c (77 aa).

The protein belongs to the universal ribosomal protein uS17 family. In terms of assembly, part of the 30S ribosomal subunit.

It is found in the plastid. The protein localises to the chloroplast. In terms of biological role, one of the primary rRNA binding proteins, it binds specifically to the 5'-end of 16S ribosomal RNA. This chain is Small ribosomal subunit protein uS17c (rps17), found in Cyanidium caldarium (Red alga).